We begin with the raw amino-acid sequence, 298 residues long: Ectoine dioxygenase (298 aa).

The span at 1–18 shows a compositional bias: basic and acidic residues; sequence MLQQAIDRDPVDRIDRYP. Residues 1–26 are disordered; the sequence is MLQQAIDRDPVDRIDRYPTRTAEPAP. Gln-133 serves as a coordination point for L-ectoine. His-150, Asp-152, and His-251 together coordinate Fe cation.

Belongs to the PhyH family. EctD subfamily. In terms of assembly, homodimer. The cofactor is Fe(2+).

It carries out the reaction L-ectoine + 2-oxoglutarate + O2 = 5-hydroxyectoine + succinate + CO2. In terms of biological role, involved in the biosynthesis of 5-hydroxyectoine, called compatible solute, which helps organisms to survive extreme osmotic stress by acting as a highly soluble organic osmolyte. Catalyzes the 2-oxoglutarate-dependent selective hydroxylation of L-ectoine to yield (4S,5S)-5-hydroxyectoine. In Nocardia farcinica (strain IFM 10152), this protein is Ectoine dioxygenase.